A 75-amino-acid polypeptide reads, in one-letter code: Large ribosomal subunit protein bL31 (75 aa).

The protein belongs to the bacterial ribosomal protein bL31 family. Type A subfamily. In terms of assembly, part of the 50S ribosomal subunit.

In terms of biological role, binds the 23S rRNA. The protein is Large ribosomal subunit protein bL31 of Sphingopyxis alaskensis (strain DSM 13593 / LMG 18877 / RB2256) (Sphingomonas alaskensis).